Consider the following 578-residue polypeptide: SWR1 complex bromodomain subunit bdf1 (578 aa).

Basic and acidic residues predominate over residues 1–18; sequence MSSESRENEVKAETKDEI. 3 disordered regions span residues 1-89, 192-254, and 504-578; these read MSSE…PPPQ, DAEQ…RKNN, and ADSS…SESA. Residues 22-36 are compositionally biased toward polar residues; the sequence is GSPQLNGDNNIQSSD. Composition is skewed to basic and acidic residues over residues 37–52 and 60–77; these read GHNDENEESLSRKRDS and LKQEEKESMPKKEPEPTV. The 107-residue stretch at 84–190 folds into the Bromo 1 domain; sequence GMPPPQQKYC…EVFERQLKQL (107 aa). A compositionally biased stretch (low complexity) spans 219–242; sequence NSSVSSTSASVAASTAPKAASPAV. 3 positions are modified to phosphoserine: Ser-221, Ser-223, and Ser-224. Thr-225 carries the post-translational modification Phosphothreonine. Phosphoserine occurs at positions 226 and 239. A Bromo 2 domain is found at 251–360; the sequence is RKNNSQMRFC…NVFKEKWEAR (110 aa). In terms of domain architecture, NET spans 430-510; that stretch reads RRDLTKEYGP…KPDADSSEPA (81 aa). A Phosphoserine modification is found at Ser-511. The span at 526–537 shows a compositional bias: basic and acidic residues; the sequence is VLSETEQAEKIR. A compositionally biased stretch (polar residues) spans 550-563; the sequence is TSPTSPESNNAANV. Acidic residues predominate over residues 566-578; it reads SESDNESESSESA.

It belongs to the BET family. In terms of assembly, component of the SWR1 chromatin-remodeling complex.

It is found in the nucleus. In terms of biological role, component of the SWR1 complex which mediates the ATP-dependent exchange of histone H2A for the H2A variant HZT1 leading to transcriptional regulation of selected genes by chromatin remodeling. In Schizosaccharomyces pombe (strain 972 / ATCC 24843) (Fission yeast), this protein is SWR1 complex bromodomain subunit bdf1 (bdf1).